A 166-amino-acid chain; its full sequence is Protein-export protein SecB (166 aa).

Belongs to the SecB family. In terms of assembly, homotetramer, a dimer of dimers. One homotetramer interacts with 1 SecA dimer.

Its subcellular location is the cytoplasm. Its function is as follows. One of the proteins required for the normal export of preproteins out of the cell cytoplasm. It is a molecular chaperone that binds to a subset of precursor proteins, maintaining them in a translocation-competent state. It also specifically binds to its receptor SecA. In Cereibacter sphaeroides (strain ATCC 17025 / ATH 2.4.3) (Rhodobacter sphaeroides), this protein is Protein-export protein SecB.